The following is a 319-amino-acid chain: Large ribosomal subunit protein uL10 (319 aa).

Over residues 286-295 (ADSGAAAPSA) the composition is skewed to low complexity. The segment at 286 to 319 (ADSGAAAPSAAKEEEKKEEPEEESDGDLGMSLFD) is disordered.

The protein belongs to the universal ribosomal protein uL10 family. In terms of assembly, P0 forms a pentameric complex by interaction with dimers of P1 and P2. Interacts with NSF. Phosphorylated. In terms of tissue distribution, highly expressed in stems, inflorescences and immature seeds (at protein level). Expressed in leaves and mature seeds (at protein level).

Functionally, ribosomal protein P0 is the functional equivalent of E.coli protein L10. This Oryza sativa subsp. japonica (Rice) protein is Large ribosomal subunit protein uL10.